The sequence spans 207 residues: N-(5'-phosphoribosyl)anthranilate isomerase (207 aa).

It belongs to the TrpF family.

The enzyme catalyses N-(5-phospho-beta-D-ribosyl)anthranilate = 1-(2-carboxyphenylamino)-1-deoxy-D-ribulose 5-phosphate. It functions in the pathway amino-acid biosynthesis; L-tryptophan biosynthesis; L-tryptophan from chorismate: step 3/5. The sequence is that of N-(5'-phosphoribosyl)anthranilate isomerase from Geotalea daltonii (strain DSM 22248 / JCM 15807 / FRC-32) (Geobacter daltonii).